The primary structure comprises 512 residues: MQPDLNPNTTQPLIALTGIGKRFPGVQALDDCRFDLRAGEVHALMGENGAGKSTLMKILAGVYQRDAGEIRMDGRPVEIADPRAAQALGIGIIHQELNLMNHLSVAQNIFIGREPRGRFGVFVDEEKLNRDAAAIFQRMRLDLDPRTPVGRLTVAKQQMVEIAKALSFDSRALIMDEPTAALNNAEIAELFRIIRDLRAHGVGIIYISHKMDELRQIADRVTVMRDGKYVATVPMADTSMESIISMMVGRQLDTETRTPPDTSGNEIALEVRGLSRGRAIRDVGFTLRRGEILGFAGLMGAGRTEVARAVFGADPVDAGEIRVHGRAVTIRTPADAVKYGIGYLSEDRKHFGLAIGMDVQNNIALSSMRRFVRRGLFLDARGMRDAARSYVRQLAIRTPSVAQPARLLSGGNQQKIVIAKWLLRDCDILFFDEPTRGIDVGAKSEIYKLLDALAADGKAIVMISSELPEVLRMSHRILVMCEGRVTGELRAADATQEKIMQLATQRESTVLS.

ABC transporter domains lie at 14–251 (IALT…VGRQ) and 262–507 (TSGN…TQRE). 46-53 (GENGAGKS) contacts ATP.

This sequence belongs to the ABC transporter superfamily. Carbohydrate importer 2 (CUT2) (TC 3.A.1.2) family.

The protein localises to the cell inner membrane. It carries out the reaction D-ribose(out) + ATP + H2O = D-ribose(in) + ADP + phosphate + H(+). The catalysed reaction is D-galactose(out) + ATP + H2O = D-galactose(in) + ADP + phosphate + H(+). In terms of biological role, part of an ABC transporter complex involved in carbohydrate import. Could be involved in ribose, galactose and/or methyl galactoside import. Responsible for energy coupling to the transport system. The polypeptide is Putative ribose/galactose/methyl galactoside import ATP-binding protein 2 (Burkholderia cenocepacia (strain HI2424)).